The chain runs to 1563 residues: Superkiller complex protein 3 (1563 aa).

Residue Ser2 is modified to N-acetylserine. 22 TPR repeats span residues 6–39, 40–73, 157–196, 272–305, 307–339, 386–419, 420–453, 455–492, 493–527, 564–597, 598–631, 632–665, 633–665, 673–713, 790–824, 826–860, 861–894, 980–1013, 1020–1053, 1055–1084, 1325–1358, and 1399–1432; these read VKTA…EKNN, YNAW…EPEQ, YELW…ADNI, GPGL…SPVC, AGWC…IDNF, PGLL…YPDL, AEAH…DAEV, EYHY…DAHM, GKVF…DDND, KWAW…DPKD, CNCW…NPDS, TYSV…KEDY, YSVF…KEDY, GECH…RADV, VQHL…DSNN, LHWN…EQIN, AAAW…DPSY, ASAF…LHSA, NVAV…ELED, IGFA…CKSE, KWSF…NPDQ, and VPAW…ASQQ.

It belongs to the SKI3 family. In terms of assembly, component of the SKI complex which consists of SKIC2, SKIC3 and SKIC8. Interacts with PAF1.

Its subcellular location is the cytoplasm. It localises to the nucleus. In terms of biological role, component of the SKI complex, a multiprotein complex that assists the RNA-degrading exosome during the mRNA decay and quality-control pathways. The SKI complex catalyzes mRNA extraction from 80S ribosomal complexes in the 3'-5' direction and channels mRNA to the cytosolic exosome for degradation. SKI-mediated extraction of mRNA from stalled ribosomes allow binding of the Pelota-HBS1L complex and subsequent ribosome disassembly by ABCE1 for ribosome recycling. In the nucleus, the SKI complex associates with transcriptionally active genes in a manner dependent on PAF1 complex (PAF1C). The chain is Superkiller complex protein 3 from Mus musculus (Mouse).